Here is a 24-residue protein sequence, read N- to C-terminus: Brevinin-1Sa (24 aa).

C18 and C24 are joined by a disulfide.

In terms of tissue distribution, expressed by the skin glands.

The protein resides in the secreted. Functionally, antibacterial activity against Gram-negative bacterium E.coli. In Lithobates sphenocephalus (Southern leopard frog), this protein is Brevinin-1Sa.